Reading from the N-terminus, the 627-residue chain is RNA interference defective protein 10 (627 aa).

3 disordered regions span residues 1-31 (MSNHRSNFRDYQREGIRANNAGTSGDAVRQN), 467-487 (QRDTDEQYDVHQEGPSNHDQY), and 523-589 (SSVR…SEDY). Composition is skewed to basic and acidic residues over residues 7-16 (NFRDYQREGI), 467-478 (QRDTDEQYDVHQ), and 526-537 (REPEHPSARSRD).

Belongs to the maelstrom family. In terms of assembly, interacts with rde-11 (via RING-type zinc finger domain). Interacts with ergo-1.

In complex with rde-11, required in the endogenous and exogenous siRNA pathway for biogenesis and accumulation of secondary small interfering RNA (siRNA) intermediates, such as 22G-siRNAs derived from ergo-1 targets. The sequence is that of RNA interference defective protein 10 from Caenorhabditis elegans.